The sequence spans 49 residues: uncharacterized protein (49 aa).

This is an uncharacterized protein from Sulfolobus spindle-shape virus 1 (SSV1).